The chain runs to 402 residues: Plasminogen activator inhibitor 1 (402 aa).

Residues 1 to 23 (MRMSPVFACLALGLALIFGEGSA) form the signal peptide. N-linked (GlcNAc...) asparagine glycans are attached at residues asparagine 232, asparagine 288, and asparagine 352.

The protein belongs to the serpin family. As to quaternary structure, forms a heterodimer with TMPRSS7. Interacts with VTN. Binds LRP1B; binding is followed by internalization and degradation. Interacts with PPP1CB. In complex with PLAU/uPA, interacts with PLAUR/uPAR. Interacts with SORL1 and LRP1, either alone or in complex with PLAU; these interactions are abolished in the presence of LRPAP1/RAP. The ternary complex composed of PLAUR-PLAU-PAI1 also interacts with SORL1. Interacts with PLAT/tPA. Also interacts with SORL1, when complexed to PLAT/tPA. In terms of tissue distribution, vascular endothelial cells may be the primary site of synthesis of plasma PAI1.

It localises to the secreted. In terms of biological role, serine protease inhibitor. Inhibits TMPRSS7. Is a primary inhibitor of tissue-type plasminogen activator (PLAT) and urokinase-type plasminogen activator (PLAU). As PLAT inhibitor, it is required for fibrinolysis down-regulation and is responsible for the controlled degradation of blood clots. As PLAU inhibitor, it is involved in the regulation of cell adhesion and spreading. Acts as a regulator of cell migration, independently of its role as protease inhibitor. It is required for stimulation of keratinocyte migration during cutaneous injury repair. It is involved in cellular and replicative senescence. Plays a role in alveolar type 2 cells senescence in the lung. Is involved in the regulation of cementogenic differentiation of periodontal ligament stem cells, and regulates odontoblast differentiation and dentin formation during odontogenesis. This chain is Plasminogen activator inhibitor 1 (SERPINE1), found in Bos taurus (Bovine).